Consider the following 200-residue polypeptide: Riboflavin synthase (200 aa).

2 Lumazine-binding repeats span residues 1–97 (MFSG…IGGH) and 98–190 (LLSG…VDTV). Residues 4–6 (GII), 48–50 (CLT), 62–67 (DVIPET), 101–103 (GHV), Lys132, 141–143 (SLT), and 155–160 (GLIPET) contribute to the 2,4-dihydroxypteridine site.

As to quaternary structure, homotrimer.

The enzyme catalyses 2 6,7-dimethyl-8-(1-D-ribityl)lumazine + H(+) = 5-amino-6-(D-ribitylamino)uracil + riboflavin. The protein operates within cofactor biosynthesis; riboflavin biosynthesis; riboflavin from 2-hydroxy-3-oxobutyl phosphate and 5-amino-6-(D-ribitylamino)uracil: step 2/2. Functionally, catalyzes the dismutation of two molecules of 6,7-dimethyl-8-ribityllumazine, resulting in the formation of riboflavin and 5-amino-6-(D-ribitylamino)uracil. This is Riboflavin synthase (ribE) from Chlamydia pneumoniae (Chlamydophila pneumoniae).